The sequence spans 122 residues: Small ribosomal subunit protein uS13 (122 aa).

Residues 94-122 (KKLPVRGQRTHTNARTRKGPAKPIAGKKK) are disordered.

The protein belongs to the universal ribosomal protein uS13 family. Part of the 30S ribosomal subunit. Forms a loose heterodimer with protein S19. Forms two bridges to the 50S subunit in the 70S ribosome.

Functionally, located at the top of the head of the 30S subunit, it contacts several helices of the 16S rRNA. In the 70S ribosome it contacts the 23S rRNA (bridge B1a) and protein L5 of the 50S subunit (bridge B1b), connecting the 2 subunits; these bridges are implicated in subunit movement. Contacts the tRNAs in the A and P-sites. The protein is Small ribosomal subunit protein uS13 of Hyphomonas neptunium (strain ATCC 15444).